The following is a 235-amino-acid chain: Transcriptional regulatory protein CseB (235 aa).

Residues 6-119 (HVLFVEDDDV…VLVARIRAVL (114 aa)) enclose the Response regulatory domain. The residue at position 55 (Asp55) is a 4-aspartylphosphate. A DNA-binding region (ompR/PhoB-type) is located at residues 141–235 (GGVLTFGELE…VRGFGYKLKA (95 aa)).

Post-translationally, phosphorylated by CseC.

The protein resides in the cytoplasm. Functionally, member of the two-component regulatory system CseB/CseC involved in the stability of the cell envelope. CseB activates transcription of RNA polymerase sigma-E factor, in response to changes in the cell envelope. The polypeptide is Transcriptional regulatory protein CseB (cseB) (Streptomyces avermitilis (strain ATCC 31267 / DSM 46492 / JCM 5070 / NBRC 14893 / NCIMB 12804 / NRRL 8165 / MA-4680)).